The following is a 599-amino-acid chain: Aspartate--tRNA(Asp/Asn) ligase (599 aa).

An L-aspartate-binding site is contributed by E172. Residues 196-199 form an aspartate region; sequence QLFK. L-aspartate is bound at residue R218. ATP contacts are provided by residues 218 to 220 and Q227; that span reads RDE. Residue H451 participates in L-aspartate binding. E485 is a binding site for ATP. R492 is a binding site for L-aspartate. Residue 537–540 coordinates ATP; the sequence is GLDR.

The protein belongs to the class-II aminoacyl-tRNA synthetase family. Type 1 subfamily. Homodimer.

It is found in the cytoplasm. The catalysed reaction is tRNA(Asx) + L-aspartate + ATP = L-aspartyl-tRNA(Asx) + AMP + diphosphate. Functionally, aspartyl-tRNA synthetase with relaxed tRNA specificity since it is able to aspartylate not only its cognate tRNA(Asp) but also tRNA(Asn). Reaction proceeds in two steps: L-aspartate is first activated by ATP to form Asp-AMP and then transferred to the acceptor end of tRNA(Asp/Asn). This chain is Aspartate--tRNA(Asp/Asn) ligase, found in Aromatoleum aromaticum (strain DSM 19018 / LMG 30748 / EbN1) (Azoarcus sp. (strain EbN1)).